The primary structure comprises 509 residues: Maturase K (509 aa).

Belongs to the intron maturase 2 family. MatK subfamily.

The protein localises to the plastid. It localises to the chloroplast. Usually encoded in the trnK tRNA gene intron. Probably assists in splicing its own and other chloroplast group II introns. The sequence is that of Maturase K from Nicotiana tomentosiformis (Tobacco).